A 469-amino-acid polypeptide reads, in one-letter code: MTNLTLMNQLTPKQIVEKLDQYIIGQTGAKKSVAVALRNRYRRQLMDESIRDEIIPKNILMIGPTGVGKTEIARRIAKIVRAPFSKVEATKFTEVGYVGRDVESMVRDLVEVSVRLVKEEKMQLVRVKAEKNAEKRLIKLLAPSQKKKQTTTQNPIEALFGGMNQSEETTEEEVDQELKNKRSQIEWRLQNGELDDEIVTVEVKEQQNPMLDMMRGAGMDQMNGMQDALSGMFPAKKKKRKVTVREAKKILFEDEASKLIDADELAAEGIHRAEQMGMIFIDEIDKIASKEGGGNAQVSREGVQRDILPIVEGSQISTKYGTVNTEYILFIAAGAFHMSKPSDLIPELQGRFPIRIELDKLTQEDFYKILTEPDNALIKQYKALLKTEGIDLIFTKEAVERIAEIAFQVNQDSDNIGARRLHTILEKLLEDLLFEAPEINMESIKVTENYVNEKLAPIMKNKDLTQFIL.

Residues I24, 66-71 (GVGKTE), D282, E347, and R419 contribute to the ATP site.

It belongs to the ClpX chaperone family. HslU subfamily. As to quaternary structure, a double ring-shaped homohexamer of HslV is capped on each side by a ring-shaped HslU homohexamer. The assembly of the HslU/HslV complex is dependent on binding of ATP.

The protein localises to the cytoplasm. In terms of biological role, ATPase subunit of a proteasome-like degradation complex; this subunit has chaperone activity. The binding of ATP and its subsequent hydrolysis by HslU are essential for unfolding of protein substrates subsequently hydrolyzed by HslV. HslU recognizes the N-terminal part of its protein substrates and unfolds these before they are guided to HslV for hydrolysis. In Listeria welshimeri serovar 6b (strain ATCC 35897 / DSM 20650 / CCUG 15529 / CIP 8149 / NCTC 11857 / SLCC 5334 / V8), this protein is ATP-dependent protease ATPase subunit HslU.